Here is a 259-residue protein sequence, read N- to C-terminus: Deoxyribose-phosphate aldolase (259 aa).

D102 acts as the Proton donor/acceptor in catalysis. K167 acts as the Schiff-base intermediate with acetaldehyde in catalysis. The active-site Proton donor/acceptor is the K201.

This sequence belongs to the DeoC/FbaB aldolase family. DeoC type 2 subfamily.

Its subcellular location is the cytoplasm. It carries out the reaction 2-deoxy-D-ribose 5-phosphate = D-glyceraldehyde 3-phosphate + acetaldehyde. Its pathway is carbohydrate degradation; 2-deoxy-D-ribose 1-phosphate degradation; D-glyceraldehyde 3-phosphate and acetaldehyde from 2-deoxy-alpha-D-ribose 1-phosphate: step 2/2. Functionally, catalyzes a reversible aldol reaction between acetaldehyde and D-glyceraldehyde 3-phosphate to generate 2-deoxy-D-ribose 5-phosphate. This chain is Deoxyribose-phosphate aldolase, found in Proteus mirabilis (strain HI4320).